We begin with the raw amino-acid sequence, 370 residues long: Conserved virulence factor C (370 aa).

It belongs to the CvfC family.

The polypeptide is Conserved virulence factor C (cvfC) (Staphylococcus haemolyticus (strain JCSC1435)).